The following is a 116-amino-acid chain: Large ribosomal subunit protein bL21c (116 aa).

This sequence belongs to the bacterial ribosomal protein bL21 family. In terms of assembly, part of the 50S ribosomal subunit.

Its subcellular location is the plastid. The protein resides in the chloroplast. In terms of biological role, this protein binds to 23S rRNA. The polypeptide is Large ribosomal subunit protein bL21c (Emiliania huxleyi (Coccolithophore)).